We begin with the raw amino-acid sequence, 184 residues long: MGEKQILDADDIRRAMTRIAHEIVERNAGVRDVALVGVRRRGVPLALRLAAALEEIEGVRVPVGILDITLYRDDLGIRGPAPVVHATDIPFDINGRTVVLVDDVLYTGRTVRAALDALTDFGRPARIQLAVLIDRGHRELPIRADFVGKNVPTSRDERIATRLHEVDGGVDGVFIVRVSESTTE.

The PRPP-binding motif lies at 98 to 110 (VVLVDDVLYTGRT).

The protein belongs to the purine/pyrimidine phosphoribosyltransferase family. PyrR subfamily.

The enzyme catalyses UMP + diphosphate = 5-phospho-alpha-D-ribose 1-diphosphate + uracil. Its function is as follows. Regulates the transcription of the pyrimidine nucleotide (pyr) operon in response to exogenous pyrimidines. Functionally, also displays a weak uracil phosphoribosyltransferase activity which is not physiologically significant. This chain is Bifunctional protein PyrR, found in Roseiflexus castenholzii (strain DSM 13941 / HLO8).